A 327-amino-acid polypeptide reads, in one-letter code: Protein MRG2 (327 aa).

The disordered stretch occupies residues 1-40 (MGSPNAAAETDLTTDDFIGDTRRDSGSDTETNTDCDGEDL). Positions 52 to 101 (FEEGERVLAKHSDCFYEAKVLKVEFKDNEWKYFVHYIGWNKSWDEWIRLD) constitute a Tudor-knot domain. A disordered region spans residues 133–156 (SKMKPRSPNVARGRKRKQDSVDTE). Positions 162–327 (SDNLLSFNIP…AVEEMEKKEG (166 aa)) constitute an MRG domain.

As to quaternary structure, interacts with HAM1 and HAM2. Interacts (via MRG domain) with CO. Component of the NuA4 histone acetyltransferase complex. In terms of tissue distribution, ubiquitous. Mainly expressed in the vasculature of cotyledons and leaves, and in roots and inflorescences.

The protein localises to the nucleus. Its function is as follows. Chromatin remodeling factor. Acts as a 'reader' protein by binding to H3K4me3 and H3K36me3 to control histone H4 acetylation. Increases the transcriptional levels of the flowering time genes FLC and FT. Binds the chromatin at the FT promoter upon interaction with CO. This Arabidopsis thaliana (Mouse-ear cress) protein is Protein MRG2.